Consider the following 127-residue polypeptide: Large ribosomal subunit protein bL12 (127 aa).

Belongs to the bacterial ribosomal protein bL12 family. As to quaternary structure, homodimer. Part of the ribosomal stalk of the 50S ribosomal subunit. Forms a multimeric L10(L12)X complex, where L10 forms an elongated spine to which 2 to 4 L12 dimers bind in a sequential fashion. Binds GTP-bound translation factors.

Its function is as follows. Forms part of the ribosomal stalk which helps the ribosome interact with GTP-bound translation factors. Is thus essential for accurate translation. This Nitratiruptor sp. (strain SB155-2) protein is Large ribosomal subunit protein bL12.